The following is a 71-amino-acid chain: Small ribosomal subunit protein bS21 (71 aa).

Basic residues predominate over residues 48 to 59 (KAAAAVKRHAKK). Positions 48–71 (KAAAAVKRHAKKVQRENRKFQRLY) are disordered. The span at 60-71 (VQRENRKFQRLY) shows a compositional bias: basic and acidic residues.

It belongs to the bacterial ribosomal protein bS21 family.

The polypeptide is Small ribosomal subunit protein bS21 (Teredinibacter turnerae (strain ATCC 39867 / T7901)).